The following is a 400-amino-acid chain: Protein phosphatase methylesterase 1 (400 aa).

A disordered region spans residues 32-70 (DENDGDALGSLPSFNGQSNRNRKYTGKTGSTTDRISSKE). The region spanning 114 to 365 (PIFIFHHGAG…DSGHFIQEDS (252 aa)) is the AB hydrolase-1 domain. Active-site residues include Ser-205, Asp-233, and His-359.

This sequence belongs to the AB hydrolase superfamily. As to quaternary structure, interacts with and inactivates the phosphatase PP2A-like catalytic subunits PPG1, PPH21, PPH22, PPH3 and SIT4.

It catalyses the reaction [phosphatase 2A protein]-C-terminal L-leucine methyl ester + H2O = [phosphatase 2A protein]-C-terminal L-leucine + methanol + H(+). In terms of biological role, demethylates proteins that have been reversibly carboxymethylated. Demethylates the phosphatase PP2A catalytic subunits PPH21 and PPH22. Forms inactive complexes (PP2Ai) with phosphatase PP2A-like catalytic subunits. Involved in the regulation of cell cycle progression at START. This is Protein phosphatase methylesterase 1 (PPE1) from Saccharomyces cerevisiae (strain ATCC 204508 / S288c) (Baker's yeast).